Reading from the N-terminus, the 65-residue chain is Large ribosomal subunit protein bL35 (65 aa).

The disordered stretch occupies residues 30–65 (AFRSHLAQNKSTKQKRQSKHGTFMHPTDYKRLKDLM). A compositionally biased stretch (basic and acidic residues) spans 56–65 (TDYKRLKDLM).

It belongs to the bacterial ribosomal protein bL35 family.

This Mycoplasma mobile (strain ATCC 43663 / 163K / NCTC 11711) (Mesomycoplasma mobile) protein is Large ribosomal subunit protein bL35.